We begin with the raw amino-acid sequence, 89 residues long: Large ribosomal subunit protein bL27 (89 aa).

The interval 1–22 (MAHKKAGGSSRNGRDSAGRRLG) is disordered.

It belongs to the bacterial ribosomal protein bL27 family.

The sequence is that of Large ribosomal subunit protein bL27 from Sphingopyxis alaskensis (strain DSM 13593 / LMG 18877 / RB2256) (Sphingomonas alaskensis).